Reading from the N-terminus, the 280-residue chain is Polyamine aminopropyltransferase 1 (280 aa).

Positions 3–237 (DIVFIERDPY…YWWTFSIASK (235 aa)) constitute a PABS domain. Glutamine 33 is a binding site for S-methyl-5'-thioadenosine. Positions 64 and 88 each coordinate spermidine. Residues aspartate 108 and 139 to 140 (DG) each bind S-methyl-5'-thioadenosine. Residue aspartate 157 is the Proton acceptor of the active site. 157–160 (DSTD) lines the spermidine pocket.

The protein belongs to the spermidine/spermine synthase family. As to quaternary structure, homodimer or homotetramer.

The protein resides in the cytoplasm. It carries out the reaction S-adenosyl 3-(methylsulfanyl)propylamine + putrescine = S-methyl-5'-thioadenosine + spermidine + H(+). It functions in the pathway amine and polyamine biosynthesis; spermidine biosynthesis; spermidine from putrescine: step 1/1. Functionally, catalyzes the irreversible transfer of a propylamine group from the amino donor S-adenosylmethioninamine (decarboxy-AdoMet) to putrescine (1,4-diaminobutane) to yield spermidine. The polypeptide is Polyamine aminopropyltransferase 1 (Aquifex aeolicus (strain VF5)).